The chain runs to 550 residues: Chaperonin GroEL (550 aa).

Residues 30-33 (TLGP), K51, 87-91 (DGTTT), G415, and D497 each bind ATP.

The protein belongs to the chaperonin (HSP60) family. As to quaternary structure, forms a cylinder of 14 subunits composed of two heptameric rings stacked back-to-back. Interacts with the co-chaperonin GroES.

Its subcellular location is the cytoplasm. It carries out the reaction ATP + H2O + a folded polypeptide = ADP + phosphate + an unfolded polypeptide.. Together with its co-chaperonin GroES, plays an essential role in assisting protein folding. The GroEL-GroES system forms a nano-cage that allows encapsulation of the non-native substrate proteins and provides a physical environment optimized to promote and accelerate protein folding. The protein is Chaperonin GroEL of Yersinia enterocolitica.